Reading from the N-terminus, the 342-residue chain is Platelet-activating factor receptor (342 aa).

Over 1-16 (MEPHDSSHMDSEFRYT) the chain is Extracellular. The chain crosses the membrane as a helical span at residues 17–38 (LFPIVYSIIFVLGVIANGYVLW). At 39 to 54 (VFARLYPCKKFNEIKI) the chain is on the cytoplasmic side. A helical transmembrane segment spans residues 55-74 (FMVNLTMADMLFLITLPLWI). At 75 to 91 (VYYQNQGNWILPKFLCN) the chain is on the extracellular side. A disulfide bond links C90 and C173. Residues 92–113 (VAGCLFFINTYCSVAFLGVITY) traverse the membrane as a helical segment. The Cytoplasmic portion of the chain corresponds to 114-133 (NRFQAVTRPIKTAQANTRKR). Residues 134 to 155 (GISLSLVIWVAIVGAASYFLIL) form a helical membrane-spanning segment. Topologically, residues 156–184 (DSTNTVPDSAGSGNVTRCFEHYEKGSVPV) are extracellular. A glycan (N-linked (GlcNAc...) asparagine) is linked at N169. The helical transmembrane segment at 185–205 (LIIHIFIVFSFFLVFLIILFC) threads the bilayer. At 206–233 (NLVIIRTLLMQPVQQQRNAEVKRRALWM) the chain is on the cytoplasmic side. A helical membrane pass occupies residues 234–254 (VCTVLAVFIICFVPHHVVQLP). Topologically, residues 255-276 (WTLAELGFQDSKFHQAINDAHQ) are extracellular. A helical transmembrane segment spans residues 277–296 (VTLCLLSTNCVLDPVIYCFL). At 297–342 (TKKFRKHLTEKFYSMRSSRKCSRATTDTVTEVVVPFNQIPGNSLKN) the chain is on the cytoplasmic side.

The protein belongs to the G-protein coupled receptor 1 family. Interacts with ARRB1. As to expression, expressed in the placenta, lung, left and right heart ventricles, heart atrium, leukocytes and differentiated HL-60 granulocytes.

The protein localises to the cell membrane. Functionally, receptor for platelet activating factor, a chemotactic phospholipid mediator that possesses potent inflammatory, smooth-muscle contractile and hypotensive activity. Seems to mediate its action via a G protein that activates a phosphatidylinositol-calcium second messenger system. The chain is Platelet-activating factor receptor (PTAFR) from Homo sapiens (Human).